Consider the following 181-residue polypeptide: ATP synthase subunit delta (181 aa).

The protein belongs to the ATPase delta chain family. As to quaternary structure, F-type ATPases have 2 components, F(1) - the catalytic core - and F(0) - the membrane proton channel. F(1) has five subunits: alpha(3), beta(3), gamma(1), delta(1), epsilon(1). F(0) has three main subunits: a(1), b(2) and c(10-14). The alpha and beta chains form an alternating ring which encloses part of the gamma chain. F(1) is attached to F(0) by a central stalk formed by the gamma and epsilon chains, while a peripheral stalk is formed by the delta and b chains.

It localises to the cell inner membrane. F(1)F(0) ATP synthase produces ATP from ADP in the presence of a proton or sodium gradient. F-type ATPases consist of two structural domains, F(1) containing the extramembraneous catalytic core and F(0) containing the membrane proton channel, linked together by a central stalk and a peripheral stalk. During catalysis, ATP synthesis in the catalytic domain of F(1) is coupled via a rotary mechanism of the central stalk subunits to proton translocation. In terms of biological role, this protein is part of the stalk that links CF(0) to CF(1). It either transmits conformational changes from CF(0) to CF(1) or is implicated in proton conduction. In Chlorobaculum tepidum (strain ATCC 49652 / DSM 12025 / NBRC 103806 / TLS) (Chlorobium tepidum), this protein is ATP synthase subunit delta.